Consider the following 333-residue polypeptide: Protein FAM170A (333 aa).

3 disordered regions span residues 1–45 (MKRR…GVGE), 73–107 (LQDS…PSYK), and 143–214 (ETSE…AKTP). The span at 10–29 (LEIEESKEAGISKSQEDISH) shows a compositional bias: basic and acidic residues. Residues 92–105 (TTAPSQQASSSCPS) show a composition bias toward low complexity. Residues 143–156 (ETSESLEKQPRMEE) are compositionally biased toward basic and acidic residues. Residues 170–179 (SDVSTRNLLS) show a composition bias toward polar residues. Positions 185–196 (GEEKEHEEKPES) are enriched in basic and acidic residues. The residue at position 213 (T213) is a Phosphothreonine. Residues 224 to 248 (FRCMACCRVFATMESLQEHVQYGIR) form a C2H2-type; degenerate zinc finger. Positions 267–333 (MESESTQEEE…RKDHCDNSGS (67 aa)) are disordered. The span at 271–281 (STQEEEEDHTE) shows a compositional bias: acidic residues. The segment covering 282–293 (ETEKPKEEKAEE) has biased composition (basic and acidic residues). Phosphoserine is present on S308.

The protein belongs to the FAM170 family. As to expression, testis-specific.

Its subcellular location is the nucleus. In terms of biological role, acts as a nuclear transcription factor that positively regulates the expression of heat shock genes. Binds to heat shock promoter elements (HSE). This chain is Protein FAM170A (Fam170a), found in Mus musculus (Mouse).